A 341-amino-acid chain; its full sequence is Fructose-1,6-bisphosphatase, cytosolic (341 aa).

The Mg(2+) site is built by Glu-71, Glu-100, Asp-121, Leu-123, and Asp-124. Substrate contacts are provided by residues 124 to 127 (DGSS), Asn-215, Tyr-247, Tyr-267, and Lys-277. Residue Glu-283 participates in Mg(2+) binding.

This sequence belongs to the FBPase class 1 family. Requires Mg(2+) as cofactor.

It is found in the cytoplasm. The protein resides in the nucleus. The catalysed reaction is beta-D-fructose 1,6-bisphosphate + H2O = beta-D-fructose 6-phosphate + phosphate. Functionally, catalyzes the first irreversible reaction from fructose-1,6-bisphosphate to fructose-6-phosphate and inorganic phosphate and plays an important regulatory role in sucrose biosynthesis and metabolism. Its activity is essential to regulate starch levels. Functions in fructose-mediated signaling independently of its catalytic activity in sugar metabolism. May act downstream of ABA2/GIN1, which is involved in abscisic acid (ABA) synthesis to regulate autotrophic transition and modulate early seedling establishment after seed germination. This chain is Fructose-1,6-bisphosphatase, cytosolic, found in Arabidopsis thaliana (Mouse-ear cress).